The sequence spans 278 residues: Large ribosomal subunit protein uL2 (278 aa).

Disordered regions lie at residues 27–58 (STPEKSLVRPLHGKGGRNAHGRITTRHKGGGH) and 224–278 (VVMN…GKKR). A compositionally biased stretch (basic residues) spans 37–58 (LHGKGGRNAHGRITTRHKGGGH). Residues 253-268 (PEGRTRKPNKPSDKLI) show a composition bias toward basic and acidic residues. Residues 269 to 278 (VRRRRTGKKR) show a composition bias toward basic residues.

The protein belongs to the universal ribosomal protein uL2 family. As to quaternary structure, part of the 50S ribosomal subunit. Forms a bridge to the 30S subunit in the 70S ribosome.

Functionally, one of the primary rRNA binding proteins. Required for association of the 30S and 50S subunits to form the 70S ribosome, for tRNA binding and peptide bond formation. It has been suggested to have peptidyltransferase activity; this is somewhat controversial. Makes several contacts with the 16S rRNA in the 70S ribosome. The sequence is that of Large ribosomal subunit protein uL2 from Mycobacterium sp. (strain KMS).